The chain runs to 472 residues: Protein c-ets-2-B (472 aa).

The 86-residue stretch at 85–170 (DTFNGFAKER…EHLEEMMKEY (86 aa)) folds into the PNT domain. The ETS DNA-binding region spans 366–446 (IQLWQFLLEL…SGKRYVYRFV (81 aa)).

Belongs to the ETS family.

The protein resides in the nucleus. Its function is as follows. Probable transcription factor. This chain is Protein c-ets-2-B (ets2-b), found in Xenopus laevis (African clawed frog).